Consider the following 519-residue polypeptide: Glycerophosphoinositol permease 1 (519 aa).

Residues 1–32 (MSDLVKSSEVIETTEVPPHNNNNNKRHFKYDS) are disordered. The chain crosses the membrane as a helical span at residues 39–59 (LAGGVKLKDALMILCAGFALI). A glycan (N-linked (GlcNAc...) asparagine) is linked at Asn-93. The next 3 membrane-spanning stretches (helical) occupy residues 94 to 114 (ASLVGTIFGQVIIGLTADYIG), 117 to 137 (WSIVTATCFLIFGTMMCAASH), and 141 to 161 (VNGMFWMLTIFRGVTGFGIGA). Asn-175 carries N-linked (GlcNAc...) asparagine glycosylation. 8 helical membrane-spanning segments follow: residues 186–206 (ILATNLPLSFGGPFALCIFLI), 216–236 (DAIWRTMFAIGCFWPLSVFYF), 273–293 (VAWFLYDFVTFPNGIFSAGII), 313–333 (LLLGAIALPGVFVGAYVVDIL), 337–357 (YTMMIGFCGYIVFGLIVGCGY), 363–383 (ITGLFIVFYGLMMSCGNFGPG), 404–424 (GISAAIGKVGAVVGTKTFSPI), and 432–452 (WTFIIAAICGLAGVLVTFIFI). Positions 487-500 (EEEDLEGSSEDSSD) are enriched in acidic residues. Positions 487–519 (EEEDLEGSSEDSSDGEIVKNNTKNDVEKVDALK) are disordered. Residue Asn-506 is glycosylated (N-linked (GlcNAc...) asparagine). Positions 508-519 (TKNDVEKVDALK) are enriched in basic and acidic residues.

It belongs to the major facilitator superfamily. Sugar transporter (TC 2.A.1.1) family.

The protein localises to the cell membrane. The catalysed reaction is sn-glycero-3-phospho-1D-myo-inositol(out) = sn-glycero-3-phospho-1D-myo-inositol(in). In terms of biological role, glycerophosphodiester transporter that mediates uptake of glycerophosphoinositol (GroPIns) as a source of inositol and phosphate. Does not possess detectable glycerophosphocholine (GroPCho) transport activity. Although no glycerophosphoinositol transport activity occurs in the absence of GIT1, C.albicans is still able to use glycerophosphoinositol as a phosphate source at pH 7.5, albeit slowly. Thus, a second, GIT1-independent, mechanism must exist for utilizing glycerophosphoinositol as a phosphate source at physiological pH. The expanded ability to utilize GroPIns and GroPCho results from the organism's pathogenic nature and its need to occupy a variety of environments within its host organism. This possibility is buttressed by the fact that GroPIns and GroPCho are present and abundant in human fluids. The chain is Glycerophosphoinositol permease 1 from Candida albicans (strain SC5314 / ATCC MYA-2876) (Yeast).